The chain runs to 287 residues: Pyridoxal kinase PdxY (287 aa).

Residues Ser-9 and 44–45 contribute to the substrate site; that span reads MQ. Residues Asp-111, Ala-142, Glu-147, and Lys-180 each contribute to the ATP site. Substrate is bound at residue Asp-221.

It belongs to the pyridoxine kinase family. PdxY subfamily. Homodimer. Mg(2+) is required as a cofactor.

It catalyses the reaction pyridoxal + ATP = pyridoxal 5'-phosphate + ADP + H(+). Its pathway is cofactor metabolism; pyridoxal 5'-phosphate salvage; pyridoxal 5'-phosphate from pyridoxal: step 1/1. Pyridoxal kinase involved in the salvage pathway of pyridoxal 5'-phosphate (PLP). Catalyzes the phosphorylation of pyridoxal to PLP. The sequence is that of Pyridoxal kinase PdxY from Burkholderia pseudomallei (strain K96243).